Consider the following 103-residue polypeptide: SOSS complex subunit C (103 aa).

This sequence belongs to the SOSS-C family. As to quaternary structure, belongs to the multiprotein complex Integrator. Component of the SOSS complex, composed of soss-b (soss-b1/nabp2 or soss-b2/nabp1), soss-a/ints3 and soss-c/inip.

Its subcellular location is the nucleus. Functionally, component of the SOSS complex, a multiprotein complex that functions downstream of the MRN complex to promote DNA repair and G2/M checkpoint. The SOSS complex associates with single-stranded DNA at DNA lesions and influences diverse endpoints in the cellular DNA damage response including cell-cycle checkpoint activation, recombinational repair and maintenance of genomic stability. Required for efficient homologous recombination-dependent repair of double-strand breaks (DSBs). The sequence is that of SOSS complex subunit C (inip) from Danio rerio (Zebrafish).